The chain runs to 462 residues: MGKLQEVLKHPDELVPLMQMLVSDYYTKIVPRDPGLGFCYRMLNKVSRSFAIVIQQLPELLRDPICVFYLVLRALDTVEDDMALPNDIKLPLLRAFHKKIYDRKWSMKCGYGPYVQLMEEYPMVTGVFLKLDPGPREVITEICRKMGAGMAEFIPKEVLTVKDYDQYCHYAAGLVGEGLSKLAVGSGLENPVLLQKEDLSNHMGLFLQKTNIVRDYLEDINEEPAPRMFWPKEIWGKYTKDLADFKDPANEKGAVQCLNHMVTDALRHGEHALKYMALLRDPQYFNFCAIPQVMAFGTLSLCYNNPQVFKGVVKLRKGESAKLMTTVKSMPALYRTFLRMADDMVARCKGEARQDPNVATTLKRLQAIQAVCKTGLRSSIKSRKKQAATPLSDDFISKLVLVLGLGYCVYAFNLLPLLWKSALIPGPPPPALTSSLGLPHQIIAVFCVLTAGYQVFLRGGLA.

NADP(+) contacts are provided by Arg-48 and Arg-73. Asp-76, Glu-79, and Asp-80 together coordinate Mg(2+). Residues Arg-214, Lys-314, and Arg-316 each contribute to the NADP(+) site. 2 consecutive transmembrane segments (helical) span residues 399–419 and 436–456; these read LVLVLGLGYCVYAFNLLPLLW and LGLPHQIIAVFCVLTAGYQVF.

Belongs to the phytoene/squalene synthase family. Mg(2+) is required as a cofactor.

The protein resides in the membrane. It catalyses the reaction 2 (2E,6E)-farnesyl diphosphate + NADH + H(+) = squalene + 2 diphosphate + NAD(+). The catalysed reaction is 2 (2E,6E)-farnesyl diphosphate + NADPH + H(+) = squalene + 2 diphosphate + NADP(+). Its function is as follows. Converts farnesyl diphosphate (FPP) into squalene, a precursor for sterol biosynthesis in eukaryotes. The chain is Squalene synthase LSS from Botryococcus braunii (Green alga).